The chain runs to 1171 residues: Putative tricorn protease homolog 2 (1171 aa).

Residues 432–498 form a disordered region; that stretch reads AGYPPDAGDE…GSPGTPATAG (67 aa). Composition is skewed to low complexity over residues 444-456 and 466-498; these read AGTAARADSAPDA and IAAGTGTGDIADADAAAGGTVTPGSPGTPATAG. Residue histidine 827 is the Charge relay system of the active site. The interval 842-941 is PDZ-like; the sequence is YQRWQGLLGA…RVAVVPLVDE (100 aa). Substrate is bound at residue 1002-1004; the sequence is AGG. Residue serine 1051 is the Nucleophile of the active site. 1079-1081 is a substrate binding site; sequence GMT. Catalysis depends on glutamate 1109, which acts as the Charge relay system. Positions 1149–1171 are disordered; that stretch reads PPATPPGYEAVPDRSRPPLPPRE. The span at 1159-1171 shows a compositional bias: basic and acidic residues; it reads VPDRSRPPLPPRE.

It belongs to the peptidase S41B family.

The protein localises to the cytoplasm. Its function is as follows. Degrades oligopeptides in a sequential manner. In Streptomyces coelicolor (strain ATCC BAA-471 / A3(2) / M145), this protein is Putative tricorn protease homolog 2 (tri2).